The following is a 457-amino-acid chain: Chromosomal replication initiator protein DnaA (457 aa).

The interval 1–71 (MSPSIWEKCL…LLKNFCNINT (71 aa)) is domain I, interacts with DnaA modulators. The tract at residues 71-119 (TTPTLMLKICKPKIIQKKFFNELTLKKNILNSKLTYNVNTKLSNIIYSS) is domain II. Positions 120–337 (EINTNYTFQN…GALNKILANS (218 aa)) are domain III, AAA+ region. Residues Gly165, Gly167, Lys168, and Thr169 each contribute to the ATP site. A domain IV, binds dsDNA region spans residues 338–457 (DSKKKIITIN…FLTLLKILSS (120 aa)).

It belongs to the DnaA family. In terms of assembly, oligomerizes as a right-handed, spiral filament on DNA at oriC.

It is found in the cytoplasm. In terms of biological role, plays an essential role in the initiation and regulation of chromosomal replication. ATP-DnaA binds to the origin of replication (oriC) to initiate formation of the DNA replication initiation complex once per cell cycle. Binds the DnaA box (a 9 base pair repeat at the origin) and separates the double-stranded (ds)DNA. Forms a right-handed helical filament on oriC DNA; dsDNA binds to the exterior of the filament while single-stranded (ss)DNA is stabiized in the filament's interior. The ATP-DnaA-oriC complex binds and stabilizes one strand of the AT-rich DNA unwinding element (DUE), permitting loading of DNA polymerase. After initiation quickly degrades to an ADP-DnaA complex that is not apt for DNA replication. Binds acidic phospholipids. This Buchnera aphidicola subsp. Baizongia pistaciae (strain Bp) protein is Chromosomal replication initiator protein DnaA.